The primary structure comprises 630 residues: Coiled-coil domain-containing protein 120 (630 aa).

An involved in CYTH2-binding region spans residues 31-70; the sequence is RLRGLLDRQRTLQEALSLKLQELRKVCLQEAELTGQLPPE. Residues 109–173 are a coiled coil; the sequence is ELALEALERE…LRDVRARLGL (65 aa). Composition is skewed to low complexity over residues 212 to 222 and 282 to 297; these read HSESSSLSESG and ASPTSPTRSLPRSASS. 2 disordered regions span residues 212–435 and 457–534; these read HSES…GAPR and GGGT…NPLL. Residues 326 to 335 show a composition bias toward polar residues; that stretch reads RQWSGSQDSQ. Phosphoserine occurs at positions 358 and 360. A compositionally biased stretch (low complexity) spans 421–434; the sequence is ARPSSAAPASRGAP. Arg435 carries the omega-N-methylarginine modification.

Interacts with NIN and CEP170; leading to recruit them to centrosomes. Directly interacts with CYTH2; this interaction stabilizes CCDC120, possibly by preventing ubiquitination. In terms of processing, ubiquitinated; interaction with CYTH2 may prevent ubiquitination.

The protein localises to the cytoplasm. Its subcellular location is the cytoskeleton. It localises to the microtubule organizing center. The protein resides in the centrosome. It is found in the centriole. The protein localises to the cell projection. Its subcellular location is the neuron projection. It localises to the growth cone. The protein resides in the endosome. In terms of biological role, centriolar protein required for centriole subdistal appendage assembly and microtubule anchoring in interphase cells. Together with CCDC68, cooperate with subdistal appendage components ODF2, NIN and CEP170 for hierarchical subdistal appendage assembly. Recruits NIN and CEP170 to centrosomes. Also required for neurite growth. Localizes CYTH2 to vesicles to allow its transport along neurites, and subsequent ARF6 activation and neurite growth. The chain is Coiled-coil domain-containing protein 120 (CCDC120) from Homo sapiens (Human).